A 971-amino-acid polypeptide reads, in one-letter code: Exportin-2 (971 aa).

Positions 29-102 (AEKYLESVEG…KSSIINLMLR (74 aa)) constitute an Importin N-terminal domain.

It belongs to the XPO2/CSE1 family.

It is found in the cytoplasm. It localises to the nucleus. In terms of biological role, export receptor for importin alpha. Mediates importin-alpha re-export from the nucleus to the cytoplasm after import substrates have been released into the nucleoplasm. The sequence is that of Exportin-2 (cse1l) from Xenopus laevis (African clawed frog).